A 481-amino-acid chain; its full sequence is WASH complex subunit 1 (481 aa).

Residues 1-54 (MVRMTQKRYLEGQVYSVPLIQPDLRREEAVHQITDALQYLEMISTDIFTRVSES) are required for WASH complex assembly. Disordered stretches follow at residues 273 to 417 (SVPA…SGGD) and 429 to 481 (RRKG…DWEA). Residues 304-341 (APPPPPPPPPPPPEPTHVPVPPPGTSAAPPPPPPPPPM) show a composition bias toward pro residues. The segment at 359 to 481 (KGAPSEVVQP…AADDEDDWEA (123 aa)) is VCA. Residues 371–393 (GRASLLESIRNAGGIGKANLRNV) enclose the WH2 domain. Residues 392–407 (NVKERKMEKKKQKEQE) show a composition bias toward basic and acidic residues.

It belongs to the WASH1 family. Component of the WASH complex.

Its subcellular location is the early endosome membrane. It is found in the recycling endosome membrane. Its function is as follows. Acts as a nucleation-promoting factor at the surface of endosomes, where it recruits and activates the Arp2/3 complex to induce actin polymerization, playing a key role in the fission of tubules that serve as transport intermediates during endosome sorting. The sequence is that of WASH complex subunit 1 from Danio rerio (Zebrafish).